The sequence spans 447 residues: Argininosuccinate synthase (447 aa).

ATP contacts are provided by residues 17 to 25 (AFSGGLDTS) and Ala-43. Residue Tyr-99 participates in L-citrulline binding. ATP is bound by residues Gly-129 and Thr-131. L-aspartate is bound by residues Thr-131, Asn-135, and Asp-136. Asn-135 is a binding site for L-citrulline. Asp-136 is an ATP binding site. L-citrulline contacts are provided by Arg-139 and Ser-192. Asp-194 contacts ATP. The L-citrulline site is built by Thr-201, Glu-203, and Glu-280.

The protein belongs to the argininosuccinate synthase family. Type 2 subfamily. As to quaternary structure, homotetramer.

The protein resides in the cytoplasm. It carries out the reaction L-citrulline + L-aspartate + ATP = 2-(N(omega)-L-arginino)succinate + AMP + diphosphate + H(+). The protein operates within amino-acid biosynthesis; L-arginine biosynthesis; L-arginine from L-ornithine and carbamoyl phosphate: step 2/3. This Paracidovorax citrulli (strain AAC00-1) (Acidovorax citrulli) protein is Argininosuccinate synthase.